Here is a 239-residue protein sequence, read N- to C-terminus: Tryptophan synthase alpha chain (239 aa).

Active-site proton acceptor residues include E34 and D45.

Belongs to the TrpA family. Tetramer of two alpha and two beta chains.

It catalyses the reaction (1S,2R)-1-C-(indol-3-yl)glycerol 3-phosphate + L-serine = D-glyceraldehyde 3-phosphate + L-tryptophan + H2O. Its pathway is amino-acid biosynthesis; L-tryptophan biosynthesis; L-tryptophan from chorismate: step 5/5. The alpha subunit is responsible for the aldol cleavage of indoleglycerol phosphate to indole and glyceraldehyde 3-phosphate. The polypeptide is Tryptophan synthase alpha chain (Thermotoga petrophila (strain ATCC BAA-488 / DSM 13995 / JCM 10881 / RKU-1)).